The following is a 400-amino-acid chain: Enoyl-[acyl-carrier-protein] reductase [NADH] (400 aa).

NAD(+) is bound by residues 48 to 53 (GASTGY), 74 to 75 (FE), 111 to 112 (DA), and 139 to 140 (LA). Tyr225 serves as a coordination point for substrate. Tyr235 serves as the catalytic Proton donor. NAD(+)-binding positions include Lys244 and 273–275 (VVT).

It belongs to the TER reductase family. In terms of assembly, monomer.

It carries out the reaction a 2,3-saturated acyl-[ACP] + NAD(+) = a (2E)-enoyl-[ACP] + NADH + H(+). The protein operates within lipid metabolism; fatty acid biosynthesis. Its function is as follows. Involved in the final reduction of the elongation cycle of fatty acid synthesis (FAS II). Catalyzes the reduction of a carbon-carbon double bond in an enoyl moiety that is covalently linked to an acyl carrier protein (ACP). This is Enoyl-[acyl-carrier-protein] reductase [NADH] from Burkholderia multivorans (strain ATCC 17616 / 249).